Reading from the N-terminus, the 125-residue chain is Scinderin (125 aa).

Residue tyrosine 13 is modified to Phosphotyrosine. Residues 23-30 (KGGLKYKA) and 49-57 (RLLHVKGRR) contribute to the a 1,2-diacyl-sn-glycero-3-phospho-(1D-myo-inositol-4,5-bisphosphate) site. The stretch at 59-99 (VRATEVPLSWDSFNKGDCFIIDLGSEIYQWFGSSCNKYERL) is one Gelsolin-like 1 repeat.

This sequence belongs to the villin/gelsolin family.

It is found in the cytoplasm. It localises to the cytoskeleton. The protein resides in the cell projection. The protein localises to the podosome. Functionally, ca(2+)-dependent actin filament-severing protein that has a regulatory function in exocytosis by affecting the organization of the microfilament network underneath the plasma membrane. In vitro, also has barbed end capping and nucleating activities in the presence of Ca(2+). Severing activity is inhibited by phosphatidylinositol 4,5-bis-phosphate (PIP2). Required for megakaryocyte differentiation, maturation, polyploidization and apoptosis with the release of platelet-like particles. Plays a role in osteoclastogenesis (OCG) and actin cytoskeletal organization in osteoclasts. Regulates chondrocyte proliferation and differentiation. Inhibits cell proliferation and tumorigenesis. Signaling is mediated by MAPK, p38 and JNK pathways. The polypeptide is Scinderin (SCIN) (Sus scrofa (Pig)).